We begin with the raw amino-acid sequence, 443 residues long: Proline--tRNA ligase (443 aa).

The protein belongs to the class-II aminoacyl-tRNA synthetase family. ProS type 2 subfamily. In terms of assembly, homodimer.

The protein resides in the cytoplasm. It carries out the reaction tRNA(Pro) + L-proline + ATP = L-prolyl-tRNA(Pro) + AMP + diphosphate. Its function is as follows. Catalyzes the attachment of proline to tRNA(Pro) in a two-step reaction: proline is first activated by ATP to form Pro-AMP and then transferred to the acceptor end of tRNA(Pro). This is Proline--tRNA ligase from Zymomonas mobilis subsp. mobilis (strain ATCC 31821 / ZM4 / CP4).